The primary structure comprises 803 residues: Phenylalanine--tRNA ligase beta subunit (803 aa).

Residues 40-153 form the tRNA-binding domain; it reads ASLDRRIVVG…SSWEIGKPFA (114 aa). Residues 400-476 form the B5 domain; it reads ADLQLLALRP…RLYGYNAIES (77 aa). Mg(2+) contacts are provided by Asp-454, Asp-460, Glu-463, and Glu-464. One can recognise an FDX-ACB domain in the interval 709–801; it reads SRFPVVERDI…AESKLGAVIR (93 aa).

It belongs to the phenylalanyl-tRNA synthetase beta subunit family. Type 1 subfamily. In terms of assembly, tetramer of two alpha and two beta subunits. It depends on Mg(2+) as a cofactor.

The protein localises to the cytoplasm. It catalyses the reaction tRNA(Phe) + L-phenylalanine + ATP = L-phenylalanyl-tRNA(Phe) + AMP + diphosphate + H(+). This Chlorobium chlorochromatii (strain CaD3) protein is Phenylalanine--tRNA ligase beta subunit.